The following is a 472-amino-acid chain: Glutamate synthase [NADPH] small chain (472 aa).

Positions 41–72 constitute a 4Fe-4S ferredoxin-type domain; that stretch reads QDAAAQAHRCLHCGNPYCEWKCPVHNYIPNWL. 4 residues coordinate [4Fe-4S] cluster: Cys-50, Cys-53, Cys-58, and Cys-62.

Requires [4Fe-4S] cluster as cofactor.

The catalysed reaction is 2 L-glutamate + NADP(+) = L-glutamine + 2-oxoglutarate + NADPH + H(+). The protein operates within amino-acid biosynthesis; L-glutamate biosynthesis via GLT pathway; L-glutamate from 2-oxoglutarate and L-glutamine (NADP(+) route): step 1/1. It participates in energy metabolism; nitrogen metabolism. Functionally, catalyzes the conversion of L-glutamine and 2-oxoglutarate into two molecules of L-glutamate. The sequence is that of Glutamate synthase [NADPH] small chain from Halomonas elongata (strain ATCC 33173 / DSM 2581 / NBRC 15536 / NCIMB 2198 / 1H9).